The following is a 536-amino-acid chain: ATP synthase subunit beta (536 aa).

The interval 1–57 (MVKAVSSSKGAAKVEQKKSAARSGVKKNASKSQASLQDTSSPLKTSSKNAHAKKDVQ) is disordered. Positions 30 to 49 (SKSQASLQDTSSPLKTSSKN) are enriched in polar residues. 208 to 215 (GGAGVGKT) contributes to the ATP binding site.

The protein belongs to the ATPase alpha/beta chains family. In terms of assembly, F-type ATPases have 2 components, CF(1) - the catalytic core - and CF(0) - the membrane proton channel. CF(1) has five subunits: alpha(3), beta(3), gamma(1), delta(1), epsilon(1). CF(0) has three main subunits: a(1), b(2) and c(9-12). The alpha and beta chains form an alternating ring which encloses part of the gamma chain. CF(1) is attached to CF(0) by a central stalk formed by the gamma and epsilon chains, while a peripheral stalk is formed by the delta and b chains.

Its subcellular location is the cell inner membrane. The enzyme catalyses ATP + H2O + 4 H(+)(in) = ADP + phosphate + 5 H(+)(out). Functionally, produces ATP from ADP in the presence of a proton gradient across the membrane. The catalytic sites are hosted primarily by the beta subunits. The chain is ATP synthase subunit beta from Bartonella quintana (strain Toulouse) (Rochalimaea quintana).